The following is a 608-amino-acid chain: Elongation factor 4 (608 aa).

One can recognise a tr-type G domain in the interval 11–193 (KKIRNFSIIA…QIVEKVPEPS (183 aa)). GTP is bound by residues 23–28 (DHGKST) and 140–143 (NKID).

It belongs to the TRAFAC class translation factor GTPase superfamily. Classic translation factor GTPase family. LepA subfamily.

It localises to the cell membrane. The catalysed reaction is GTP + H2O = GDP + phosphate + H(+). Its function is as follows. Required for accurate and efficient protein synthesis under certain stress conditions. May act as a fidelity factor of the translation reaction, by catalyzing a one-codon backward translocation of tRNAs on improperly translocated ribosomes. Back-translocation proceeds from a post-translocation (POST) complex to a pre-translocation (PRE) complex, thus giving elongation factor G a second chance to translocate the tRNAs correctly. Binds to ribosomes in a GTP-dependent manner. The chain is Elongation factor 4 from Listeria monocytogenes serotype 4b (strain CLIP80459).